The following is a 179-amino-acid chain: Peroxiredoxin (179 aa).

One can recognise a Thioredoxin domain in the interval 2-152 (TMEKQVPIVT…VEGWFEEEGF (151 aa)). The Cysteine sulfenic acid (-SOH) intermediate (for peroxiredoxin activity) role is filled by cysteine 56.

This sequence belongs to the peroxiredoxin family. Prx5 subfamily. As to quaternary structure, monomer.

The catalysed reaction is a hydroperoxide + 2 glutathione = an alcohol + glutathione disulfide + H2O. Its function is as follows. Thiol-specific peroxidase that catalyzes the reduction of hydrogen peroxide and organic hydroperoxides to water and alcohols, respectively. Plays a role in cell protection against oxidative stress by detoxifying peroxides. The chain is Peroxiredoxin from Rhizobium etli.